The primary structure comprises 199 residues: MIASLRGKLLQLEIDRLVVEVSGVGYEVMIPFPLHLECKDKLNTEIYIHTFHSITDRGQRLFGFGSKKDRESFELIKSLHGIGELTALKILSFFQADDLYQIAKADDKKTLEKIPKVKGKTSEKILFEIKQNLKKFEMFLNEGTTESSFVDRETDLATLALIQLGFDEKSATKQVADAKKLNPGLSASDIVKQVITGTR.

The tract at residues 1-65 (MIASLRGKLL…DRGQRLFGFG (65 aa)) is domain I. Residues 66 to 144 (SKKDRESFEL…KFEMFLNEGT (79 aa)) form a domain II region. The flexible linker stretch occupies residues 145-155 (TESSFVDRETD). The domain III stretch occupies residues 155–199 (DLATLALIQLGFDEKSATKQVADAKKLNPGLSASDIVKQVITGTR).

Belongs to the RuvA family. Homotetramer. Forms an RuvA(8)-RuvB(12)-Holliday junction (HJ) complex. HJ DNA is sandwiched between 2 RuvA tetramers; dsDNA enters through RuvA and exits via RuvB. An RuvB hexamer assembles on each DNA strand where it exits the tetramer. Each RuvB hexamer is contacted by two RuvA subunits (via domain III) on 2 adjacent RuvB subunits; this complex drives branch migration. In the full resolvosome a probable DNA-RuvA(4)-RuvB(12)-RuvC(2) complex forms which resolves the HJ.

Its subcellular location is the cytoplasm. Its function is as follows. The RuvA-RuvB-RuvC complex processes Holliday junction (HJ) DNA during genetic recombination and DNA repair, while the RuvA-RuvB complex plays an important role in the rescue of blocked DNA replication forks via replication fork reversal (RFR). RuvA specifically binds to HJ cruciform DNA, conferring on it an open structure. The RuvB hexamer acts as an ATP-dependent pump, pulling dsDNA into and through the RuvAB complex. HJ branch migration allows RuvC to scan DNA until it finds its consensus sequence, where it cleaves and resolves the cruciform DNA. The sequence is that of Holliday junction branch migration complex subunit RuvA from Leptospira biflexa serovar Patoc (strain Patoc 1 / Ames).